Reading from the N-terminus, the 303-residue chain is Putative band 7 family protein R614 (303 aa).

It belongs to the band 7/mec-2 family.

This chain is Putative band 7 family protein R614, found in Acanthamoeba polyphaga (Amoeba).